The chain runs to 341 residues: S-adenosylmethionine:tRNA ribosyltransferase-isomerase (341 aa).

The protein belongs to the QueA family. In terms of assembly, monomer.

The protein localises to the cytoplasm. It catalyses the reaction 7-aminomethyl-7-carbaguanosine(34) in tRNA + S-adenosyl-L-methionine = epoxyqueuosine(34) in tRNA + adenine + L-methionine + 2 H(+). It functions in the pathway tRNA modification; tRNA-queuosine biosynthesis. Functionally, transfers and isomerizes the ribose moiety from AdoMet to the 7-aminomethyl group of 7-deazaguanine (preQ1-tRNA) to give epoxyqueuosine (oQ-tRNA). This Desulfitobacterium hafniense (strain DSM 10664 / DCB-2) protein is S-adenosylmethionine:tRNA ribosyltransferase-isomerase.